A 498-amino-acid polypeptide reads, in one-letter code: Membrane-bound lytic murein transglycosylase F (498 aa).

A signal peptide spans 1 to 29 (MFFKPDFRPRCAKWLIATGLFLMLGACVE). The interval 30 to 267 (KPTTLERVKE…RLKDRYYGHV (238 aa)) is non-LT domain. The LT domain stretch occupies residues 268–498 (DVLGYVGAYT…SSSSTDESPL (231 aa)). Residue glutamate 314 is part of the active site. The tract at residues 464–498 (VADGNLHVPGVDKTQPPVPPASPVPSSSSTDESPL) is disordered.

It in the N-terminal section; belongs to the bacterial solute-binding protein 3 family. In the C-terminal section; belongs to the transglycosylase Slt family.

It is found in the cell outer membrane. The catalysed reaction is Exolytic cleavage of the (1-&gt;4)-beta-glycosidic linkage between N-acetylmuramic acid (MurNAc) and N-acetylglucosamine (GlcNAc) residues in peptidoglycan, from either the reducing or the non-reducing ends of the peptidoglycan chains, with concomitant formation of a 1,6-anhydrobond in the MurNAc residue.. Murein-degrading enzyme that degrades murein glycan strands and insoluble, high-molecular weight murein sacculi, with the concomitant formation of a 1,6-anhydromuramoyl product. Lytic transglycosylases (LTs) play an integral role in the metabolism of the peptidoglycan (PG) sacculus. Their lytic action creates space within the PG sacculus to allow for its expansion as well as for the insertion of various structures such as secretion systems and flagella. This Pseudomonas syringae pv. syringae (strain B728a) protein is Membrane-bound lytic murein transglycosylase F.